The chain runs to 404 residues: Coenzyme F420H(2) oxidase (404 aa).

The Fe cation site is built by His83, Glu85, Asp87, His88, His151, Asp170, and His233. The Flavodoxin-like domain maps to 259 to 399 (VTVIYDTMHG…ACFEAGRKLA (141 aa)). FMN contacts are provided by residues 265–270 (TMHGST), 317–320 (TIYD), and 351–356 (SMGGNG).

It in the N-terminal section; belongs to the zinc metallo-hydrolase group 3 family. In terms of assembly, homodimer. Homotetramer. The tetramer is composed of two functional dimers. FMN serves as cofactor. It depends on Fe cation as a cofactor.

It carries out the reaction 2 reduced coenzyme F420-(gamma-L-Glu)(n) + O2 = 2 oxidized coenzyme F420-(gamma-L-Glu)(n) + 2 H2O + 2 H(+). Functionally, catalyzes the oxidation of F420H(2) with O(2). May be involved in O(2) detoxification, reducing the intracellular O(2) concentration to a level allowing growth at the expense of methane formation. This is Coenzyme F420H(2) oxidase from Methanothermobacter marburgensis (strain ATCC BAA-927 / DSM 2133 / JCM 14651 / NBRC 100331 / OCM 82 / Marburg) (Methanobacterium thermoautotrophicum).